Reading from the N-terminus, the 996-residue chain is Sarcoplasmic/endoplasmic reticulum calcium ATPase 1 (996 aa).

Topologically, residues 1-48 (MENAHTKSPAECLSYFGVNEHTGLSPDQFKKNLDKFGYNELPAEEGKS) are cytoplasmic. Residues 49-69 (IWDLIVEQFEDLLVRILLLAA) traverse the membrane as a helical segment. Topologically, residues 70 to 89 (CISFVLAWFEEGEETITAFV) are lumenal. Residues 90 to 110 (EPFVILLILIANAIVGVWQER) traverse the membrane as a helical segment. At 111-253 (NAEDAIEALK…QEKTPLQAKL (143 aa)) the chain is on the cytoplasmic side. The chain crosses the membrane as a helical span at residues 254-273 (DEFGEQLSKVISLICVAVWA). The Lumenal segment spans residues 274 to 295 (INIGHFNDPVHGGSWIRGAVYY). The chain crosses the membrane as a helical span at residues 296–313 (FKIAVALAVAAIPEGLPA). Ca(2+)-binding residues include V304, A305, I307, and E309. Residues 314–754 (VITTCLALGT…EEGRAIYNNM (441 aa)) lie on the Cytoplasmic side of the membrane. The active-site 4-aspartylphosphate intermediate is D351. The Mg(2+) site is built by D351 and T353. ATP is bound by residues T353, E442, R489, K512, R557, T622, G623, D624, R675, and K681. D700 serves as a coordination point for Mg(2+). N703 is an ATP binding site. Residues 755 to 774 (KQFIRYLISSNVGEVVCIFL) form a helical membrane-spanning segment. Positions 765 and 768 each coordinate Ca(2+). The Lumenal portion of the chain corresponds to 775–784 (TAALGLPEAL). A helical membrane pass occupies residues 785–805 (IPVQLLWVNLVTDGLPATALG). Residues 785–805 (IPVQLLWVNLVTDGLPATALG) form an interaction with PLN region. Residues N793, T796, and D797 each contribute to the Ca(2+) site. Residues 806–825 (FNPPDLDIMGKPPRSPKEPL) are Cytoplasmic-facing. A helical transmembrane segment spans residues 826–848 (ISGWLFFRYMAIGGYVGAATVGG). At 849 to 894 (AAWWFLYDSTGPAVTYYQLSHFMQCHNHNEDFTGVDCDIFEASPPM) the chain is on the lumenal side. A disulfide bridge links C873 with C885. Residues 895–914 (TMALSVLVTIEMCNALNSLS) form a helical membrane-spanning segment. E905 contacts Ca(2+). Residues 915 to 927 (ENQSLIRMPPWSN) lie on the Cytoplasmic side of the membrane. A helical membrane pass occupies residues 928-946 (LWLMAAMTLSMSLHFMIIY). Residues 929-940 (WLMAAMTLSMSL) are interaction with PLN. The Lumenal segment spans residues 947–961 (VDPLPMIFKLTHLTF). The chain crosses the membrane as a helical span at residues 962 to 982 (DQWLMVFKLSFPVILIDEVLK). Over 983 to 996 (FFARNYIETGKEVK) the chain is Cytoplasmic.

It belongs to the cation transport ATPase (P-type) (TC 3.A.3) family. Type IIA subfamily. Interacts with sarcolipin (SLN). Interacts with phospholamban (PLN). Interacts with myoregulin (MRLN). Interacts with DWORF. Mg(2+) serves as cofactor.

The protein resides in the endoplasmic reticulum membrane. It is found in the sarcoplasmic reticulum membrane. The catalysed reaction is Ca(2+)(in) + ATP + H2O = Ca(2+)(out) + ADP + phosphate + H(+). Inhibited by sarcolipin (SLN) and myoregulin (MRLN). Also shown to be inhibited by phospholamban (PLN) in vitro. Enhanced by DWORF; DWORF increases activity by displacing sarcolipin (SLN), phospholamban (PLN) and myoregulin (MRLN). Functionally, key regulator of striated muscle performance by acting as the major Ca(2+) ATPase responsible for the reuptake of cytosolic Ca(2+) into the sarcoplasmic reticulum. Catalyzes the hydrolysis of ATP coupled with the translocation of calcium from the cytosol to the sarcoplasmic reticulum lumen. Contributes to calcium sequestration involved in muscular excitation/contraction. This Makaira nigricans (Atlantic blue marlin) protein is Sarcoplasmic/endoplasmic reticulum calcium ATPase 1 (atp2a1).